Reading from the N-terminus, the 424-residue chain is Imidazolonepropionase (424 aa).

Positions 84 and 86 each coordinate Fe(3+). Zn(2+) is bound by residues H84 and H86. 3 residues coordinate 4-imidazolone-5-propanoate: R93, Y156, and H189. Y156 contacts N-formimidoyl-L-glutamate. A Fe(3+)-binding site is contributed by H254. H254 is a binding site for Zn(2+). E257 contacts 4-imidazolone-5-propanoate. D328 serves as a coordination point for Fe(3+). Zn(2+) is bound at residue D328. Residues N330 and G332 each coordinate N-formimidoyl-L-glutamate. S333 is a 4-imidazolone-5-propanoate binding site.

The protein belongs to the metallo-dependent hydrolases superfamily. HutI family. It depends on Zn(2+) as a cofactor. Fe(3+) is required as a cofactor.

It is found in the cytoplasm. The catalysed reaction is 4-imidazolone-5-propanoate + H2O = N-formimidoyl-L-glutamate. It functions in the pathway amino-acid degradation; L-histidine degradation into L-glutamate; N-formimidoyl-L-glutamate from L-histidine: step 3/3. Catalyzes the hydrolytic cleavage of the carbon-nitrogen bond in imidazolone-5-propanoate to yield N-formimidoyl-L-glutamate. It is the third step in the universal histidine degradation pathway. This chain is Imidazolonepropionase, found in Geobacillus sp. (strain WCH70).